The sequence spans 137 residues: Methylmalonyl-CoA decarboxylase subunit delta (137 aa).

A helical membrane pass occupies residues 30-50; that stretch reads VTVVLGMGITVVALIFLMYII.

Belongs to the OadG family. The methylmalonyl-CoA decarboxylase is composed of four subunits: the carboxyltransferase alpha subunit (MmdA), the tunnel beta subunit (MmdB), the biotin-containing gamma subunit (MmdC) and the delta subunit (MmdD).

The protein localises to the cell membrane. It carries out the reaction (S)-methylmalonyl-CoA + Na(+)(in) + H(+)(out) = propanoyl-CoA + Na(+)(out) + CO2. Its function is as follows. Subunit of the sodium ion pump methylmalonyl-CoA decarboxylase, which converts the chemical energy of a decarboxylation reaction into an electrochemical gradient of Na(+) ions across the cytoplasmic membrane, thereby creating a sodium ion motive force that is used for ATP synthesis. The delta subunit is required for catalytic activity as well as for the proper assembly of the individual subunits to an enzyme complex. The sequence is that of Methylmalonyl-CoA decarboxylase subunit delta from Propionigenium modestum.